Here is a 349-residue protein sequence, read N- to C-terminus: NADH-quinone oxidoreductase subunit H (349 aa).

Transmembrane regions (helical) follow at residues F11 to V31, G83 to I103, V116 to G136, I162 to V182, F200 to L220, L252 to F272, V288 to V308, and L323 to L343.

Belongs to the complex I subunit 1 family. In terms of assembly, NDH-1 is composed of 14 different subunits. Subunits NuoA, H, J, K, L, M, N constitute the membrane sector of the complex.

Its subcellular location is the cell inner membrane. It catalyses the reaction a quinone + NADH + 5 H(+)(in) = a quinol + NAD(+) + 4 H(+)(out). In terms of biological role, NDH-1 shuttles electrons from NADH, via FMN and iron-sulfur (Fe-S) centers, to quinones in the respiratory chain. The immediate electron acceptor for the enzyme in this species is believed to be ubiquinone. Couples the redox reaction to proton translocation (for every two electrons transferred, four hydrogen ions are translocated across the cytoplasmic membrane), and thus conserves the redox energy in a proton gradient. This subunit may bind ubiquinone. The protein is NADH-quinone oxidoreductase subunit H of Bartonella henselae (strain ATCC 49882 / DSM 28221 / CCUG 30454 / Houston 1) (Rochalimaea henselae).